Reading from the N-terminus, the 448-residue chain is Exodeoxyribonuclease 7 large subunit (448 aa).

Belongs to the XseA family. Heterooligomer composed of large and small subunits.

The protein resides in the cytoplasm. It catalyses the reaction Exonucleolytic cleavage in either 5'- to 3'- or 3'- to 5'-direction to yield nucleoside 5'-phosphates.. Its function is as follows. Bidirectionally degrades single-stranded DNA into large acid-insoluble oligonucleotides, which are then degraded further into small acid-soluble oligonucleotides. This is Exodeoxyribonuclease 7 large subunit from Shewanella baltica (strain OS223).